The following is a 508-amino-acid chain: Serine/threonine-protein kinase VRK2 (508 aa).

The Protein kinase domain occupies 29 to 319; the sequence is WVLGKKIGSG…KKILNPHGIP (291 aa). Residues 35–43 and Lys61 each bind ATP; that span reads IGSGGFGLI. The Proton acceptor role is filled by Asp166. Thr336 is subject to Phosphothreonine. Residues 397 to 508 form an interaction with MAP3K7 region; sequence TRRRQKYQES…MLVFLALFFL (112 aa). Phosphoserine is present on Ser406. The chain crosses the membrane as a helical; Anchor for type IV membrane protein span at residues 487-507; it reads VYYYRIIIPVLLMLVFLALFF.

It belongs to the protein kinase superfamily. CK1 Ser/Thr protein kinase family. VRK subfamily. In terms of assembly, isoform 1 interacts with MAP3K7, MAP2K7, MAP2K1 and KSR1. Isoform 1 and isoform 2 interact with RAN and MAPK8IP1. (Microbial infection) Isoform 1 interacts with Epstein-Barr virus BHRF1; this interaction is involved in protecting cells from apoptosis. As to quaternary structure, (Microbial infection) Isoform 1 interacts with vaccinia protein B12. Autophosphorylated. As to expression, isoform 1 and isoform 2 are expressed in various tumor cell lines. Expression of isoform 1 inversely correlates with ERBB2 in breast carcinomas (at protein level). Widely expressed. Highly expressed in fetal liver, skeletal muscle, pancreas, heart, peripheral blood leukocytes and testis.

The protein localises to the cytoplasm. Its subcellular location is the endoplasmic reticulum membrane. The protein resides in the mitochondrion membrane. It localises to the nucleus envelope. It is found in the nucleus. It carries out the reaction L-seryl-[protein] + ATP = O-phospho-L-seryl-[protein] + ADP + H(+). It catalyses the reaction L-threonyl-[protein] + ATP = O-phospho-L-threonyl-[protein] + ADP + H(+). Its activity is regulated as follows. RAN inhibits its autophosphorylation and its ability to phosphorylate histone H3. Functionally, serine/threonine kinase that regulates several signal transduction pathways. Isoform 1 modulates the stress response to hypoxia and cytokines, such as interleukin-1 beta (IL1B) and this is dependent on its interaction with MAPK8IP1, which assembles mitogen-activated protein kinase (MAPK) complexes. Inhibition of signal transmission mediated by the assembly of MAPK8IP1-MAPK complexes reduces JNK phosphorylation and JUN-dependent transcription. Phosphorylates 'Thr-18' of p53/TP53, histone H3, and may also phosphorylate MAPK8IP1. Phosphorylates BANF1 and disrupts its ability to bind DNA and reduces its binding to LEM domain-containing proteins. Down-regulates the transactivation of transcription induced by ERBB2, HRAS, BRAF, and MEK1. Blocks the phosphorylation of ERK in response to ERBB2 and HRAS. Can also phosphorylate the following substrates that are commonly used to establish in vitro kinase activity: casein, MBP and histone H2B, but it is not sure that this is physiologically relevant. Phosphorylates 'Thr-18' of p53/TP53, as well as histone H3. Reduces p53/TP53 ubiquitination by MDM2, promotes p53/TP53 acetylation by EP300 and thereby increases p53/TP53 stability and activity. This Homo sapiens (Human) protein is Serine/threonine-protein kinase VRK2 (VRK2).